Consider the following 333-residue polypeptide: DNA-directed RNA polymerase subunit alpha (333 aa).

Residues 1–234 (MQSSVNEFLT…QQLAAFVDLK (234 aa)) are alpha N-terminal domain (alpha-NTD). Positions 248–333 (IDPILLRPVD…SLKKDDKATA (86 aa)) are alpha C-terminal domain (alpha-CTD).

Belongs to the RNA polymerase alpha chain family. In terms of assembly, homodimer. The RNAP catalytic core consists of 2 alpha, 1 beta, 1 beta' and 1 omega subunit. When a sigma factor is associated with the core the holoenzyme is formed, which can initiate transcription.

It catalyses the reaction RNA(n) + a ribonucleoside 5'-triphosphate = RNA(n+1) + diphosphate. Its function is as follows. DNA-dependent RNA polymerase catalyzes the transcription of DNA into RNA using the four ribonucleoside triphosphates as substrates. The protein is DNA-directed RNA polymerase subunit alpha of Stutzerimonas stutzeri (strain A1501) (Pseudomonas stutzeri).